The sequence spans 92 residues: Small ribosomal subunit protein uS19c (92 aa).

It belongs to the universal ribosomal protein uS19 family.

Its subcellular location is the plastid. The protein resides in the chloroplast. Functionally, protein S19 forms a complex with S13 that binds strongly to the 16S ribosomal RNA. In Vitis vinifera (Grape), this protein is Small ribosomal subunit protein uS19c.